Reading from the N-terminus, the 349-residue chain is NADP-dependent alcohol dehydrogenase C 1 (349 aa).

Zn(2+) is bound by residues Cys-41, His-63, Cys-94, Cys-97, Cys-100, Cys-108, and Cys-159. Residue Lys-210 forms an Isoglutamyl lysine isopeptide (Lys-Gln) (interchain with Q-Cter in protein Pup) linkage.

This sequence belongs to the zinc-containing alcohol dehydrogenase family. Zn(2+) serves as cofactor.

The catalysed reaction is a primary alcohol + NADP(+) = an aldehyde + NADPH + H(+). Its function is as follows. Prefers aldehydes over alcohols. The protein is NADP-dependent alcohol dehydrogenase C 1 (adhc1) of Mycolicibacterium smegmatis (strain ATCC 700084 / mc(2)155) (Mycobacterium smegmatis).